A 228-amino-acid chain; its full sequence is 7-cyano-7-deazaguanine synthase (228 aa).

Position 10–20 (10–20 (FSGGQDSTTLA)) interacts with ATP. Zn(2+)-binding residues include C190, C205, C208, and C211.

Belongs to the QueC family. Zn(2+) is required as a cofactor.

The catalysed reaction is 7-carboxy-7-deazaguanine + NH4(+) + ATP = 7-cyano-7-deazaguanine + ADP + phosphate + H2O + H(+). It participates in purine metabolism; 7-cyano-7-deazaguanine biosynthesis. Catalyzes the ATP-dependent conversion of 7-carboxy-7-deazaguanine (CDG) to 7-cyano-7-deazaguanine (preQ(0)). The protein is 7-cyano-7-deazaguanine synthase of Helicobacter pylori (strain P12).